Here is a 580-residue protein sequence, read N- to C-terminus: Pescadillo homolog (580 aa).

Acidic residues predominate over residues 291-303 (EPEEENEVDEFPA). The interval 291–321 (EPEEENEVDEFPADPENAGQEEEQKKQLQEE) is disordered. A compositionally biased stretch (basic and acidic residues) spans 312–321 (EEQKKQLQEE). Residues 323–416 (KHKSMFVGLK…MLLPVEDYFP (94 aa)) enclose the BRCT domain. The tract at residues 448–496 (KGENPEDDDDDDEEDDEDEEEDDEDEDDEENEEEEEDKKLRHLENKKVG) is disordered. Residues 452-483 (PEDDDDDDEEDDEDEEEDDEDEDDEENEEEEE) show a composition bias toward acidic residues. Positions 484-494 (DKKLRHLENKK) are enriched in basic and acidic residues.

It belongs to the pescadillo family. Component of the PeBoW complex, composed of bop1, pes1 and wdr12. The complex is held together by bop1, which interacts with pes1 via its N-terminal domain and with wdr12 via a high-affinity interaction between the seven-bladed beta-propeller domains of the 2 proteins. The PeBoW complex associates with the 66S pre-ribosome.

It localises to the nucleus. The protein resides in the nucleolus. Its subcellular location is the nucleoplasm. Its function is as follows. Component of the PeBoW complex, which is required for maturation of 28S and 5.8S ribosomal RNAs and formation of the 60S ribosome. The protein is Pescadillo homolog (pes1) of Xenopus tropicalis (Western clawed frog).